Here is an 89-residue protein sequence, read N- to C-terminus: Putative membrane protein insertion efficiency factor (89 aa).

A disordered region spans residues 68–89 (VPPPNSDARNAPHEAEASSHRL). The span at 77–89 (NAPHEAEASSHRL) shows a compositional bias: basic and acidic residues.

This sequence belongs to the UPF0161 family.

It is found in the cell inner membrane. Could be involved in insertion of integral membrane proteins into the membrane. The chain is Putative membrane protein insertion efficiency factor from Burkholderia thailandensis (strain ATCC 700388 / DSM 13276 / CCUG 48851 / CIP 106301 / E264).